Here is a 327-residue protein sequence, read N- to C-terminus: GMP reductase (327 aa).

The active-site Thioimidate intermediate is Cys176. Position 205–228 (205–228 (IIADGGIRTHGDIAKSIRFGASMV)) interacts with NADP(+).

Belongs to the IMPDH/GMPR family. GuaC type 2 subfamily.

It catalyses the reaction IMP + NH4(+) + NADP(+) = GMP + NADPH + 2 H(+). Catalyzes the irreversible NADPH-dependent deamination of GMP to IMP. It functions in the conversion of nucleobase, nucleoside and nucleotide derivatives of G to A nucleotides, and in maintaining the intracellular balance of A and G nucleotides. The polypeptide is GMP reductase (Streptococcus pyogenes serotype M6 (strain ATCC BAA-946 / MGAS10394)).